The chain runs to 688 residues: PTS system glucoside-specific EIICBA component (688 aa).

The PTS EIIC type-1 domain occupies 3 to 427 (KKLFGQLQRI…FKLKTPGRED (425 aa)). A run of 10 helical transmembrane segments spans residues 12–32 (IGKALMLPVAILPAAGILLAF), 81–101 (LGLAGGDGVAALAALVGYLIM), 137–157 (LVLGIPTLQTGVFGGIIMGAL), 182–202 (FVPIVTSVVAIATGVLLSFAW), 223–243 (LTTFIFGIIERSLIPFGLHHI), 284–304 (AFTTGKYPFMMFGLPAAAFAI), 315–335 (VVGGLMLSAGLTAFLTGITEP), 340–360 (FLFVAPVLYGIHVLLAGTSFL), 364–384 (LLGVKIGMTFSGGFIDYILYG), and 395–415 (LVIPVGIVYAIVYYFLFDFAI). Positions 438 to 519 (AKLPFDVLDA…AKIMSGEITK (82 aa)) constitute a PTS EIIB type-1 domain. C460 acts as the Phosphocysteine intermediate; for EIIB activity in catalysis. A PTS EIIA type-1 domain is found at 560 to 664 (DQVFAGKMMG…SIVTPMIITN (105 aa)). Residue H612 is the Tele-phosphohistidine intermediate; for EIIA activity of the active site.

The protein resides in the cell membrane. Its function is as follows. The phosphoenolpyruvate-dependent sugar phosphotransferase system (sugar PTS), a major carbohydrate active -transport system, catalyzes the phosphorylation of incoming sugar substrates concomitantly with their translocation across the cell membrane. This system is involved in alpha- and beta-glucoside transport. The protein is PTS system glucoside-specific EIICBA component (glcB) of Staphylococcus aureus (strain USA300).